The sequence spans 131 residues: MSMQDTVADMLTRVRNAQMAKKQTVSMPSSKLKVAIANVLQQEGYISNVEVAQEEAKATLTLTLKYFEGKPVIETVKRVSRPGLRQYRGKDKIPSVKQGLGIAIVSTSKGIMTDRAARAAGIGGEVIAFVS.

This sequence belongs to the universal ribosomal protein uS8 family. In terms of assembly, part of the 30S ribosomal subunit. Contacts proteins S5 and S12.

One of the primary rRNA binding proteins, it binds directly to 16S rRNA central domain where it helps coordinate assembly of the platform of the 30S subunit. In Acinetobacter baylyi (strain ATCC 33305 / BD413 / ADP1), this protein is Small ribosomal subunit protein uS8.